The sequence spans 314 residues: F-box protein AUF2 (314 aa).

The F-box domain maps to 1–49 (MDVFDGLPDPIIVDILNKVGDVKTLLRCSSLSKRFNSLVPQSESLTLRL).

In terms of assembly, part of a SCF (ASK-cullin-F-box) protein ligase complex.

It localises to the nucleus. It functions in the pathway protein modification; protein ubiquitination. Component of SCF(ASK-cullin-F-box) E3 ubiquitin ligase complexes, which may mediate the ubiquitination and subsequent proteasomal degradation of target proteins. The chain is F-box protein AUF2 from Arabidopsis thaliana (Mouse-ear cress).